Reading from the N-terminus, the 457-residue chain is Methylphosphonate synthase (457 aa).

Residues 23–74 enclose the HTH cro/C1-type 1 domain; that stretch reads ILNDIKRRPEDAANELGVSIEEINSIISGKQKISPSLIEKAVNIWPVNERDF. Residues 32–50 constitute a DNA-binding region (H-T-H motif); sequence EDAANELGVSIEEINSIIS. Residues His148 and His190 each coordinate Fe cation. The HTH cro/C1-type 2 domain occupies 247–301; sequence LEYYFELSNLTKEKFAKRTNFSMETLADFFTKKKLPTFDELKIIAKALNVNSRDL. Positions 258 to 277 form a DNA-binding region, H-T-H motif; that stretch reads KEKFAKRTNFSMETLADFFT.

Belongs to the non-heme iron-dependent dioxygenase family. Fe(2+) is required as a cofactor.

The catalysed reaction is 2-hydroxyethylphosphonate + O2 = methylphosphonate + hydrogencarbonate + H(+). It functions in the pathway phosphorus metabolism; phosphonate biosynthesis. Its function is as follows. Catalyzes the conversion of 2-hydroxyethylphosphonate into methylphosphonate in the methylphosphonate biosynthesis pathway. In Nitrosopumilus maritimus (strain SCM1), this protein is Methylphosphonate synthase (mpnS).